The chain runs to 610 residues: Preterminal protein (610 aa).

The segment at 288 to 379 is disordered; sequence TLRSGTQTGL…ESFSDDVGLS (92 aa). Residues 328–337 carry the Nuclear localization signal motif; sequence SLPIRRRRRR. The span at 331–340 shows a compositional bias: basic residues; it reads IRRRRRRGTR. Residues 341–350 show a composition bias toward basic and acidic residues; it reads RQVEREDSVR. Ser549 is modified (O-(5'-phospho-DNA)-serine).

It belongs to the adenoviridae terminal protein family. In terms of assembly, heterodimer with the polymerase; this heterodimer binds to bp 9 to 18 of the genome. Interacts with host POU2F1; POU2F1 binds to the auxiliary sequences in the inverted terminal repeats and tethers the pTP-POL heterodimer to the origin DNA thereby participating in the assembly of the pre-initiation complex (POL-TP-DBP-NFIA-POU2F1). Post-translationally, preterminal protein is used to replicate viral genome, upon genomic encapsidation it is processed first into iTP and finally into TP by adenovirus protease.

Its subcellular location is the host nucleus matrix. Protein covalently bound to the viral DNA that acts as a primer for viral genomic replication by DNA strand displacement. Assembles on the viral origin of replication in an initiation complex with viral polymerase, DBP, host NFIA and host POU2F1/OCT1. During initiation, the polymerase covalently couples the first dCTP with Ser-580 of pTP. The terminal protein stimulates the template activity over 20 fold compared to protein-free templates. Neo-synthesized viral genomes are linked to two preterminal proteins, one for each 5' end. These new genomes are encapsidated in the nucleus, and during capsid maturation by viral protease, preterminal protein is first cleaved into intermediary (iTP), then into mature TP. May play a role in host nuclear matrix localization of genomic DNA. The protein is Preterminal protein of Snake adenovirus serotype 1 (SnAdV-1).